The primary structure comprises 228 residues: Translation initiation factor 6 (228 aa).

The protein belongs to the eIF-6 family.

In terms of biological role, binds to the 50S ribosomal subunit and prevents its association with the 30S ribosomal subunit to form the 70S initiation complex. The protein is Translation initiation factor 6 of Thermococcus gammatolerans (strain DSM 15229 / JCM 11827 / EJ3).